A 450-amino-acid chain; its full sequence is MGRKYFGTDGVRGRVGDSTITPEFVMRLGYAAGVTLVGREQLPPGERPAILIGKDTRISGYMLEAALEAGFAAAGVDVMLAGPVPTPAVAYLTRALRLQAGVVISASHNPYDDNGIKFFSANGTKLPDALEEEIEFRVDQPMVCAEASRLGKARRIVDAAGRYVEFCKSAFPNEFDLRGYRIVLDCAHGAAYHIGPSVFHELGAEVIPLGVEPNGLNINDQVGATHPQTLRSAVLANKADFGIALDGDGDRVVMVDGDGELYDGDKLLYVIAASRQAEGRLEGVVGTLMSNLGLERAIGRLGLAFARAKVGDRYVLETMHERGWRLGGENSGHIICLDRHTTGDGIVSALQVIAALIKGQCTLATACADLVFYPQKLINVPLAAGFDWRSDERIDQARSDAELELGEQGRVLLRPSGTEPLLRVMVEGKDGSQVERLARHIADCVRHASV.

The active-site Phosphoserine intermediate is the Ser-107. Mg(2+)-binding residues include Ser-107, Asp-246, Asp-248, and Asp-250. Ser-107 carries the phosphoserine modification.

It belongs to the phosphohexose mutase family. It depends on Mg(2+) as a cofactor. Activated by phosphorylation.

It catalyses the reaction alpha-D-glucosamine 1-phosphate = D-glucosamine 6-phosphate. Its function is as follows. Catalyzes the conversion of glucosamine-6-phosphate to glucosamine-1-phosphate. This is Phosphoglucosamine mutase from Aromatoleum aromaticum (strain DSM 19018 / LMG 30748 / EbN1) (Azoarcus sp. (strain EbN1)).